We begin with the raw amino-acid sequence, 335 residues long: D-alanine--D-alanine ligase (335 aa).

Residues Lys-124 to Ser-330 enclose the ATP-grasp domain. Residue Ala-154–Glu-209 participates in ATP binding. 3 residues coordinate Mg(2+): Asp-284, Glu-297, and Asn-299.

It belongs to the D-alanine--D-alanine ligase family. Mg(2+) serves as cofactor. Mn(2+) is required as a cofactor.

The protein resides in the cytoplasm. It catalyses the reaction 2 D-alanine + ATP = D-alanyl-D-alanine + ADP + phosphate + H(+). It participates in cell wall biogenesis; peptidoglycan biosynthesis. In terms of biological role, cell wall formation. The chain is D-alanine--D-alanine ligase from Shewanella denitrificans (strain OS217 / ATCC BAA-1090 / DSM 15013).